The sequence spans 317 residues: Melanocyte-stimulating hormone receptor (317 aa).

Residues 1-37 lie on the Extracellular side of the membrane; the sequence is MPAQGSQRSLLGSLNSTLMATSSLGLSANQSGPQCLE. 2 N-linked (GlcNAc...) asparagine glycosylation sites follow: Asn-15 and Asn-29. A helical membrane pass occupies residues 38 to 63; the sequence is VSVPDGLFLCLGLVSLVENMLVVAAI. The Cytoplasmic portion of the chain corresponds to 64–72; the sequence is AKNRNLHSP. The chain crosses the membrane as a helical span at residues 73–93; it reads MYCFICCLALSDLLVSVSNVL. Over 94 to 118 the chain is Extracellular; the sequence is ETAVMLLLEAGALAAQATVVQQLDN. A helical transmembrane segment spans residues 119 to 140; it reads IIDVLVCSSMVSSLCFLGAIAM. Over 141-163 the chain is Cytoplasmic; it reads DRYISIFYALRYHSIVTLSRAQW. The helical transmembrane segment at 164-183 threads the bilayer; that stretch reads ATAAVWAAGILSSTLFIAYY. The Extracellular segment spans residues 184-191; sequence DHTAVLLC. A helical transmembrane segment spans residues 192-211; sequence LVVFFLAMLVLMAVLYAHML. Residues 212 to 240 lie on the Cytoplasmic side of the membrane; it reads TQACQHVQGITRLHKRQHLVQQGFGLKGA. The helical transmembrane segment at 241–266 threads the bilayer; sequence ATLTILLGVFLLCWGPFFLHLTLIAV. The Extracellular segment spans residues 267 to 279; that stretch reads CPQHPTCSCVFKN. The helical transmembrane segment at 280 to 300 threads the bilayer; that stretch reads FKLFLALIICNAIVDPLIYAF. Residues 301 to 317 are Cytoplasmic-facing; sequence RXQELRKTLKEVLLFSW.

It belongs to the G-protein coupled receptor 1 family. Interacts with MGRN1, but does not undergo MGRN1-mediated ubiquitination; this interaction competes with GNAS-binding and thus inhibits agonist-induced cAMP production. Interacts with OPN3; the interaction results in a decrease in MC1R-mediated cAMP signaling and ultimately a decrease in melanin production in melanocytes.

The protein localises to the cell membrane. Receptor for MSH (alpha, beta and gamma) and ACTH. The activity of this receptor is mediated by G proteins which activate adenylate cyclase. Mediates melanogenesis, the production of eumelanin (black/brown) and phaeomelanin (red/yellow), via regulation of cAMP signaling in melanocytes. The protein is Melanocyte-stimulating hormone receptor (MC1R) of Loris tardigradus (Slender loris).